Consider the following 335-residue polypeptide: Phenylalanine--tRNA ligase alpha subunit (335 aa).

A Mg(2+)-binding site is contributed by E262.

The protein belongs to the class-II aminoacyl-tRNA synthetase family. Phe-tRNA synthetase alpha subunit type 1 subfamily. Tetramer of two alpha and two beta subunits. Mg(2+) is required as a cofactor.

The protein resides in the cytoplasm. It catalyses the reaction tRNA(Phe) + L-phenylalanine + ATP = L-phenylalanyl-tRNA(Phe) + AMP + diphosphate + H(+). In Prochlorococcus marinus (strain MIT 9313), this protein is Phenylalanine--tRNA ligase alpha subunit.